The sequence spans 66 residues: UPF0434 protein Nwi_0075 (66 aa).

The protein belongs to the UPF0434 family.

The polypeptide is UPF0434 protein Nwi_0075 (Nitrobacter winogradskyi (strain ATCC 25391 / DSM 10237 / CIP 104748 / NCIMB 11846 / Nb-255)).